The primary structure comprises 414 residues: MSATVIREDGAYHSFCGLTCVGWLYQKIKDSFFLVLGTHTCAHLLQNVLGVMVFARPRFGVALIEEADLSKQQPELNAIIDEIVADHHPSVIFLLSSCTPEVMKVEFDGLARAVSRPNLPVLFVPASGLDYTFSQAEDSVLQALLPFCPVAPADDRRVVFLGSVNDAIADDFHTEAARLGIPVAGFLPESHFRDLPPIGPGTVVAPLQPYLAKVAGRLARERGATVMTSLFPFGPDGTRAFWEDLAAAMGKAVDLSERERQAWERLEPHLEILRGKKVFFTADNLMELPLARFLRNAGCIILECSSPYINRKFHARELAALDGVRVVEQPNFDRQLRDIRALRPDLVISTLATTNPLVGHGVVAKWSTEFSFMPIQGWSGAATLAGMFTRPLKRHAQLDPLMDDPLWVAGLMPG.

[4Fe-4S] cluster is bound by residues Cys-16, Cys-41, and Cys-98.

This sequence belongs to the BchN/ChlN family. Protochlorophyllide reductase is composed of three subunits; BchL, BchN and BchB. Forms a heterotetramer of two BchB and two BchN subunits. Requires [4Fe-4S] cluster as cofactor.

It catalyses the reaction chlorophyllide a + oxidized 2[4Fe-4S]-[ferredoxin] + 2 ADP + 2 phosphate = protochlorophyllide a + reduced 2[4Fe-4S]-[ferredoxin] + 2 ATP + 2 H2O. It functions in the pathway porphyrin-containing compound metabolism; bacteriochlorophyll biosynthesis (light-independent). Its function is as follows. Component of the dark-operative protochlorophyllide reductase (DPOR) that uses Mg-ATP and reduced ferredoxin to reduce ring D of protochlorophyllide (Pchlide) to form chlorophyllide a (Chlide). This reaction is light-independent. The NB-protein (BchN-BchB) is the catalytic component of the complex. In Roseiflexus castenholzii (strain DSM 13941 / HLO8), this protein is Light-independent protochlorophyllide reductase subunit N.